A 156-amino-acid chain; its full sequence is Small ribosomal subunit protein uS7 (156 aa).

It belongs to the universal ribosomal protein uS7 family. In terms of assembly, part of the 30S ribosomal subunit. Contacts proteins S9 and S11.

Its function is as follows. One of the primary rRNA binding proteins, it binds directly to 16S rRNA where it nucleates assembly of the head domain of the 30S subunit. Is located at the subunit interface close to the decoding center, probably blocks exit of the E-site tRNA. This is Small ribosomal subunit protein uS7 from Prochlorococcus marinus subsp. pastoris (strain CCMP1986 / NIES-2087 / MED4).